The primary structure comprises 333 residues: Transaldolase (333 aa).

Residue Lys135 is the Schiff-base intermediate with substrate of the active site.

Belongs to the transaldolase family. Type 1 subfamily. In terms of assembly, homodimer.

It is found in the cytoplasm. The catalysed reaction is D-sedoheptulose 7-phosphate + D-glyceraldehyde 3-phosphate = D-erythrose 4-phosphate + beta-D-fructose 6-phosphate. The protein operates within carbohydrate degradation; pentose phosphate pathway; D-glyceraldehyde 3-phosphate and beta-D-fructose 6-phosphate from D-ribose 5-phosphate and D-xylulose 5-phosphate (non-oxidative stage): step 2/3. Its function is as follows. Transaldolase is important for the balance of metabolites in the pentose-phosphate pathway. This chain is Transaldolase, found in Prochlorococcus marinus subsp. pastoris (strain CCMP1986 / NIES-2087 / MED4).